The following is a 114-amino-acid chain: MSQAELSTCSAPQTQRIFQEAVRKGNTQELQSLLQNMTNCEFNVNSFGPEGQTALHQSVIDGNLELVKLLVKFGADIRLANRDGWSALHIAAFGGHQDIVLYLITKAKYAASGR.

ANK repeat units lie at residues 50 to 79 (EGQT…DIRL) and 83 to 112 (DGWS…YAAS).

The protein belongs to the NRARP family. In terms of assembly, interacts with LEF1.

Functionally, downstream effector of Notch signaling. Involved in the regulation of liver cancer cells self-renewal. Involved in angiogenesis acting downstream of Notch at branch points to regulate vascular density. Proposed to integrate endothelial Notch and Wnt signaling to control stalk cell proliferation and to stablilize new endothelial connections during angiogenesis. During somitogenesis involved in maintenance of proper somite segmentation and proper numbers of somites and vertebrae. Required for proper anterior-posterior somite patterning. Proposed to function in a negative feedback loop to destabilize Notch 1 intracellular domain (NICD) and down-regulate the Notch signal, preventing expansion of the Notch signal into the anterior somite domain. The polypeptide is Notch-regulated ankyrin repeat-containing protein (NRARP) (Homo sapiens (Human)).